A 271-amino-acid polypeptide reads, in one-letter code: Type III pantothenate kinase (271 aa).

Residue 6 to 13 (DVRNTNIV) participates in ATP binding. 109-112 (GADR) is a substrate binding site. The active-site Proton acceptor is the Asp-111. Asp-131 contacts K(+). Residue Thr-134 coordinates ATP. Thr-186 is a binding site for substrate.

Belongs to the type III pantothenate kinase family. As to quaternary structure, homodimer. The cofactor is NH4(+). K(+) serves as cofactor.

The protein resides in the cytoplasm. The enzyme catalyses (R)-pantothenate + ATP = (R)-4'-phosphopantothenate + ADP + H(+). Its pathway is cofactor biosynthesis; coenzyme A biosynthesis; CoA from (R)-pantothenate: step 1/5. Catalyzes the phosphorylation of pantothenate (Pan), the first step in CoA biosynthesis. This chain is Type III pantothenate kinase, found in Rhodococcus jostii (strain RHA1).